Here is a 72-residue protein sequence, read N- to C-terminus: Large ribosomal subunit protein uL29 (72 aa).

It belongs to the universal ribosomal protein uL29 family.

This chain is Large ribosomal subunit protein uL29 (rpmC), found in Chlamydia pneumoniae (Chlamydophila pneumoniae).